Reading from the N-terminus, the 479-residue chain is Aspartyl/glutamyl-tRNA(Asn/Gln) amidotransferase subunit B (479 aa).

This sequence belongs to the GatB/GatE family. GatB subfamily. In terms of assembly, heterotrimer of A, B and C subunits.

The enzyme catalyses L-glutamyl-tRNA(Gln) + L-glutamine + ATP + H2O = L-glutaminyl-tRNA(Gln) + L-glutamate + ADP + phosphate + H(+). It carries out the reaction L-aspartyl-tRNA(Asn) + L-glutamine + ATP + H2O = L-asparaginyl-tRNA(Asn) + L-glutamate + ADP + phosphate + 2 H(+). Its function is as follows. Allows the formation of correctly charged Asn-tRNA(Asn) or Gln-tRNA(Gln) through the transamidation of misacylated Asp-tRNA(Asn) or Glu-tRNA(Gln) in organisms which lack either or both of asparaginyl-tRNA or glutaminyl-tRNA synthetases. The reaction takes place in the presence of glutamine and ATP through an activated phospho-Asp-tRNA(Asn) or phospho-Glu-tRNA(Gln). The polypeptide is Aspartyl/glutamyl-tRNA(Asn/Gln) amidotransferase subunit B (Streptococcus pyogenes serotype M12 (strain MGAS2096)).